The primary structure comprises 309 residues: Methionyl-tRNA formyltransferase (309 aa).

109 to 112 lines the (6S)-5,6,7,8-tetrahydrofolate pocket; the sequence is SLLP.

Belongs to the Fmt family.

The enzyme catalyses L-methionyl-tRNA(fMet) + (6R)-10-formyltetrahydrofolate = N-formyl-L-methionyl-tRNA(fMet) + (6S)-5,6,7,8-tetrahydrofolate + H(+). Attaches a formyl group to the free amino group of methionyl-tRNA(fMet). The formyl group appears to play a dual role in the initiator identity of N-formylmethionyl-tRNA by promoting its recognition by IF2 and preventing the misappropriation of this tRNA by the elongation apparatus. This is Methionyl-tRNA formyltransferase from Clostridium perfringens (strain 13 / Type A).